A 220-amino-acid polypeptide reads, in one-letter code: Protein LURP-one-related 12 (220 aa).

The protein belongs to the LOR family.

Functionally, might be related to the phospholipid scramblase and tubby-like superfamily of membrane tethered transcription factors. The chain is Protein LURP-one-related 12 from Arabidopsis thaliana (Mouse-ear cress).